We begin with the raw amino-acid sequence, 864 residues long: DNA mismatch repair protein MutS (864 aa).

607–614 (GPNMGGKS) serves as a coordination point for ATP.

This sequence belongs to the DNA mismatch repair MutS family.

In terms of biological role, this protein is involved in the repair of mismatches in DNA. It is possible that it carries out the mismatch recognition step. This protein has a weak ATPase activity. This chain is DNA mismatch repair protein MutS, found in Neisseria meningitidis serogroup C (strain 053442).